Reading from the N-terminus, the 962-residue chain is Exportin-T (962 aa).

Methionine 1 bears the N-acetylmethionine mark. Lysine 634 carries the post-translational modification N6-acetyllysine.

In terms of assembly, found in a complex with XPOT, Ran and tRNA. Probably found in a complex with nucleoporins. Interacts with Ran and tRNA in a GTP-dependent manner.

It is found in the nucleus. It localises to the cytoplasm. Mediates the nuclear export of aminoacylated tRNAs. In the nucleus binds to tRNA and to the GTPase Ran in its active GTP-bound form. Docking of this trimeric complex to the nuclear pore complex (NPC) is mediated through binding to nucleoporins. Upon transit of a nuclear export complex into the cytoplasm, disassembling of the complex and hydrolysis of Ran-GTP to Ran-GDP (induced by RANBP1 and RANGAP1, respectively) cause release of the tRNA from the export receptor. XPOT then return to the nuclear compartment and mediate another round of transport. The directionality of nuclear export is thought to be conferred by an asymmetric distribution of the GTP- and GDP-bound forms of Ran between the cytoplasm and nucleus. This chain is Exportin-T (XPOT), found in Pongo abelii (Sumatran orangutan).